A 92-amino-acid chain; its full sequence is MTRSVWKGPFVDGYLLKKADAALASGRKDVIKTWSRRSTIMPQFVGLVFGVHNGQKHVPVSVSEDMVGMKFGEFAPTRNFPGHAADKKAKRK.

The protein belongs to the universal ribosomal protein uS19 family.

In terms of biological role, protein S19 forms a complex with S13 that binds strongly to the 16S ribosomal RNA. This Caulobacter sp. (strain K31) protein is Small ribosomal subunit protein uS19.